The chain runs to 383 residues: uncharacterized protein (383 aa).

An N-terminal signal peptide occupies residues 1 to 23 (MKLTSIPIASTLLSLLAASGTLA).

This sequence belongs to the but2 family.

The protein resides in the cytoplasm. The protein localises to the nucleus. This is an uncharacterized protein from Schizosaccharomyces pombe (strain 972 / ATCC 24843) (Fission yeast).